A 132-amino-acid chain; its full sequence is Small ribosomal subunit protein uS8 (132 aa).

It belongs to the universal ribosomal protein uS8 family. As to quaternary structure, part of the 30S ribosomal subunit. Contacts proteins S5 and S12.

Functionally, one of the primary rRNA binding proteins, it binds directly to 16S rRNA central domain where it helps coordinate assembly of the platform of the 30S subunit. The sequence is that of Small ribosomal subunit protein uS8 from Borrelia turicatae (strain 91E135).